The chain runs to 273 residues: Large ribosomal subunit protein uL2cy (273 aa).

2 disordered regions span residues 1-27 (MAIHLYKTSTPSTRNGAVDSQVKSNPR) and 224-273 (NPVD…RRRK).

This sequence belongs to the universal ribosomal protein uL2 family. In terms of assembly, part of the 50S ribosomal subunit.

The protein localises to the plastid. The protein resides in the chloroplast. This chain is Large ribosomal subunit protein uL2cy (rpl2-B), found in Liriodendron tulipifera (Tuliptree).